A 124-amino-acid chain; its full sequence is UPF0375 protein Y45F10C.4 (124 aa).

Positions 1 to 23 are cleaved as a signal peptide; that stretch reads MNFLPSTVLLLSFVVAIISGSFS. Residues Asn36 and Asn62 are each glycosylated (N-linked (GlcNAc...) asparagine).

This sequence belongs to the UPF0375 family.

Its subcellular location is the secreted. The chain is UPF0375 protein Y45F10C.4 from Caenorhabditis elegans.